Consider the following 247-residue polypeptide: MTRKFFVGGNWKMNGDYASVDGIVTFLNASADNSSVDVVVAPPAPYLAYAKSKLKAGVLVAAQNCYKVPKGAFTGEISPAMIKDLGLEWVILGHSERRHVFGESDALIAEKTVHALEAGIKVVFCIGEKLEEREAGHTKDVNFRQLQAIVDKGVSWENIVIAYEPVWAIGTGKTASGEQAQEVHEWIRAFLKEKVSPAVADATRIIYGGSVTADNAAELGKKPDIDGFLVGGASLKPDFVKIINARS.

Substrate-binding residues include Asn-10 and Lys-12. The active-site Electrophile is His-94. Residue Glu-164 is the Proton acceptor of the active site.

This sequence belongs to the triosephosphate isomerase family. As to quaternary structure, homodimer.

The protein localises to the cytoplasm. The enzyme catalyses D-glyceraldehyde 3-phosphate = dihydroxyacetone phosphate. The catalysed reaction is dihydroxyacetone phosphate = methylglyoxal + phosphate. It participates in carbohydrate biosynthesis; gluconeogenesis. Its pathway is carbohydrate degradation; glycolysis; D-glyceraldehyde 3-phosphate from glycerone phosphate: step 1/1. Functionally, triosephosphate isomerase is an extremely efficient metabolic enzyme that catalyzes the interconversion between dihydroxyacetone phosphate (DHAP) and D-glyceraldehyde-3-phosphate (G3P) in glycolysis and gluconeogenesis. Its function is as follows. It is also responsible for the non-negligible production of methylglyoxal a reactive cytotoxic side-product that modifies and can alter proteins, DNA and lipids. This is Triosephosphate isomerase (tpi-1) from Caenorhabditis elegans.